Consider the following 234-residue polypeptide: uncharacterized protein (234 aa).

A compositionally biased stretch (low complexity) spans 1 to 12 (MGSSSSSSLNNS). The disordered stretch occupies residues 1-184 (MGSSSSSSLN…TPYLSGANSR (184 aa)). Polar residues-rich tracts occupy residues 21–40 (TPESQMTVNDNKNDNVSILS) and 52–64 (KSTSIPANNNLTP). Low complexity predominate over residues 66-77 (KSRWSFSSSKKS). Positions 105–120 (GDFTPSLGNTPKSSFS) are enriched in polar residues. The segment covering 152-167 (LGELFRDSIREEREES) has biased composition (basic and acidic residues).

Interacts with RLK902. As to expression, expressed in stems, rosette leaves and roots and weakly in inflorescences.

This is an uncharacterized protein from Arabidopsis thaliana (Mouse-ear cress).